Consider the following 65-residue polypeptide: MPKIKTVRGAAKRFKKTASGGFKRKHANLRHILTKKSTKRKRHLRPKSMVSKGDLGLVVRCLPYA.

This sequence belongs to the bacterial ribosomal protein bL35 family.

The sequence is that of Large ribosomal subunit protein bL35 from Sodalis glossinidius (strain morsitans).